A 381-amino-acid polypeptide reads, in one-letter code: NAD-dependent methanol dehydrogenase (381 aa).

The protein belongs to the iron-containing alcohol dehydrogenase family. In terms of assembly, homodecamer. Requires Mg(2+) as cofactor. The cofactor is Zn(2+).

It localises to the cytoplasm. It catalyses the reaction methanol + NAD(+) = formaldehyde + NADH + H(+). It participates in one-carbon metabolism; methanol degradation; formaldehyde from methanol: step 1/1. Stimulated by the activator protein Act which requires the presence of magnesium ions. Inhibited by 1,10-phenanthroline. Catalyzes the oxidation of methanol to yield formaldehyde. It possesses a NADH-dependent formaldehyde reductase activity and cannot use NADP. This chain is NAD-dependent methanol dehydrogenase, found in Bacillus methanolicus.